Here is a 138-residue protein sequence, read N- to C-terminus: Protein X (138 aa).

The interval 24-48 (ESGGPAVSRPSAGSASRADSPLPSA) is disordered. The segment at 68 to 113 (PCCLGFTCAEFGAMVSTMNFVTWHAKRQLGMPTKDLWTPYVRNQLL) is mitochondrial targeting sequence.

The protein belongs to the orthohepadnavirus protein X family. In terms of assembly, may form homodimer. May interact with host CEBPA, CFLAR, CREB1, DDB1, E4F1, HBXIP, HSPD1/HSP60, NFKBIA, POLR2E and SMAD4. Interacts with host SMC5-SMC6 complex and induces its degradation. Interacts with host TRPC4AP; leading to prevent ubiquitination of TRPC4AP. Interacts with host PLSCR1; this interaction promotes ubiquitination and degradation of HBx and impairs HBx-mediated cell proliferation. A fraction may be phosphorylated in insect cells and HepG2 cells, a human hepatoblastoma cell line. Phosphorylated in vitro by host protein kinase C or mitogen-activated protein kinase. N-acetylated in insect cells.

The protein localises to the host cytoplasm. The protein resides in the host nucleus. It is found in the host mitochondrion. Functionally, multifunctional protein that plays a role in silencing host antiviral defenses and promoting viral transcription. Does not seem to be essential for HBV infection. May be directly involved in development of cirrhosis and liver cancer (hepatocellular carcinoma). Most of cytosolic activities involve modulation of cytosolic calcium. The effect on apoptosis is controversial depending on the cell types in which the studies have been conducted. May induce apoptosis by localizing in mitochondria and causing loss of mitochondrial membrane potential. May also modulate apoptosis by binding host CFLAR, a key regulator of the death-inducing signaling complex (DISC). Promotes viral transcription by using the host E3 ubiquitin ligase DDB1 to target the SMC5-SMC6 complex to proteasomal degradation. This host complex would otherwise bind to viral episomal DNA, and prevents its transcription. Moderately stimulates transcription of many different viral and cellular transcription elements. Promoters and enhancers stimulated by HBx contain DNA binding sites for NF-kappa-B, AP-1, AP-2, c-EBP, ATF/CREB, or the calcium-activated factor NF-AT. The sequence is that of Protein X from Arctic squirrel hepatitis virus (ASHV).